Here is a 556-residue protein sequence, read N- to C-terminus: Acetyl-coenzyme A thioesterase (556 aa).

Positions 6–118 (APGEVLMSQA…FSTFVVKPLG (113 aa)) constitute a HotDog ACOT-type 1 domain. Lysine 34 is subject to N6-succinyllysine. Residues 54-56 (TAS) and 83-85 (STS) contribute to the CoA site. Position 97 is an N6-succinyllysine (lysine 97). Arginine 145 is a CoA binding site. Residues lysine 160 and lysine 229 each carry the N6-succinyllysine modification. One can recognise a HotDog ACOT-type 2 domain in the interval 180 to 295 (MATSVQSIEL…FLIYNAVDDQ (116 aa)). Position 235-237 (235-237 (KFR)) interacts with CoA. One can recognise an START domain in the interval 341-550 (GTQWDISKKG…IKFIENATHD (210 aa)).

In terms of assembly, homodimer or homotetramer.

The protein resides in the cytoplasm. It is found in the cytosol. It catalyses the reaction acetyl-CoA + H2O = acetate + CoA + H(+). The catalysed reaction is butanoyl-CoA + H2O = butanoate + CoA + H(+). It carries out the reaction hexanoyl-CoA + H2O = hexanoate + CoA + H(+). Its pathway is lipid metabolism; fatty acid metabolism. With respect to regulation, allosterically regulated by ATP (activator) and ADP (inhibitor). Cold labile, it dissociates into inactive monomers at low temperature. Functionally, catalyzes the hydrolysis of acyl-CoAs into free fatty acids and coenzyme A (CoASH), regulating their respective intracellular levels. Preferentially hydrolyzes acetyl-CoA. The polypeptide is Acetyl-coenzyme A thioesterase (Acot12) (Rattus norvegicus (Rat)).